We begin with the raw amino-acid sequence, 248 residues long: PF03932 family protein CutC (248 aa).

Belongs to the CutC family. In terms of assembly, homodimer.

Its subcellular location is the cytoplasm. This Salmonella typhimurium (strain LT2 / SGSC1412 / ATCC 700720) protein is PF03932 family protein CutC.